Consider the following 785-residue polypeptide: Potassium transporter 5 (785 aa).

At 1-60 the chain is on the cytoplasmic side; sequence MDGEEHQIDGDEVNNHENKLNEKKKSWGKLYRPDSFIIEAGQTPTNTGRRSLMSWRTTMS. Ser35 is modified (phosphoserine). The chain crosses the membrane as a helical span at residues 61–81; sequence LAFQSLGVVYGDIGTSPLYVY. Over 82–97 the chain is Extracellular; the sequence is ASTFTDGINDKDDVVG. The helical transmembrane segment at 98-118 threads the bilayer; sequence VLSLIIYTITLVALLKYVFIV. At 119-184 the chain is on the cytoplasmic side; the sequence is LQANDNGEGG…EKLENSKFAK (66 aa). The chain crosses the membrane as a helical span at residues 185–205; that stretch reads IILFLVTIMGTSMVIGDGILT. At 206–218 the chain is on the extracellular side; that stretch reads PSISVLSAVSGIK. A helical transmembrane segment spans residues 219-239; that stretch reads SLGQNTVVGVSVAILIVLFAF. Residues 240 to 247 lie on the Cytoplasmic side of the membrane; sequence QRFGTDKV. Residues 248-268 traverse the membrane as a helical segment; that stretch reads GFSFAPIILVWFTFLIGIGLF. Residues 269–297 are Extracellular-facing; sequence NLFKHDITVLKALNPLYIIYYFRRTGRQG. A helical membrane pass occupies residues 298–318; it reads WISLGGVFLCITGTEAMFADL. Over 319–327 the chain is Cytoplasmic; sequence GHFSVRAVQ. The chain crosses the membrane as a helical span at residues 328 to 348; sequence ISFSCVAYPALVTIYCGQAAY. At 349-367 the chain is on the extracellular side; the sequence is LTKHTYNVSNTFYDSIPDP. N-linked (GlcNAc...) asparagine glycosylation is present at Asn355. A helical transmembrane segment spans residues 368-388; it reads LYWPTFVVAVAASIIASQAMI. Residues 389–419 lie on the Cytoplasmic side of the membrane; sequence SGAFSVISQSLRMGCFPRVKVVHTSAKYEGQ. The helical transmembrane segment at 420-440 threads the bilayer; the sequence is VYIPEINYLLMLACIAVTLAF. At 441 to 451 the chain is on the extracellular side; it reads RTTEKIGHAYG. A helical transmembrane segment spans residues 452–472; the sequence is IAVVTVMVITTLMVTLIMLVI. Over 473–476 the chain is Cytoplasmic; sequence WKTN. Residues 477–497 form a helical membrane-spanning segment; it reads IVWIAIFLVVFGSIEMLYLSS. Residues 498–501 are Extracellular-facing; it reads VMYK. The chain crosses the membrane as a helical span at residues 502–522; sequence FTSGGYLPLTITVVLMAMMAI. Residues 523–785 are Cytoplasmic-facing; the sequence is WQYVHVLKYR…LLKVGMTYEL (263 aa). Residues 660–699 are disordered; sequence GGEVDETDKEEEPNAETTVVPSSNYVPSSGRIGSAHSSSS. Positions 662–673 are enriched in acidic residues; that stretch reads EVDETDKEEEPN. The span at 674–686 shows a compositional bias: polar residues; the sequence is AETTVVPSSNYVP. The span at 687 to 697 shows a compositional bias: low complexity; that stretch reads SSGRIGSAHSS.

The protein belongs to the HAK/KUP transporter (TC 2.A.72.3) family. In terms of assembly, interacts with ILK1. Post-translationally, phosphorylated at the N-terminus (amino acids 1-95) by CIPK23. In terms of tissue distribution, predominantly expressed in the roots.

Its subcellular location is the cell membrane. In terms of biological role, high-affinity potassium transporter. Can also transport rubidium and cesium. Is essential with AKT1 for high-affinity potassium uptake in roots during seedling establishment and postgermination growth under low potassium conditions. Mediates potassium uptake by plant roots in response to low potassium conditions, by a calcium-, CBL-, and CIPK-dependent pathway. Positively regulated by the calcium sensors calcineurin B-like genes CBL1, CBL8, CBL9 and CBL10, and by phosphorylation by CIPK23. In Arabidopsis thaliana (Mouse-ear cress), this protein is Potassium transporter 5 (POT5).